Reading from the N-terminus, the 318-residue chain is Deoxyribose-phosphate aldolase (318 aa).

Asp155 acts as the Proton donor/acceptor in catalysis. The Schiff-base intermediate with acetaldehyde role is filled by Lys218. Catalysis depends on Lys254, which acts as the Proton donor/acceptor.

Belongs to the DeoC/FbaB aldolase family. DeoC type 2 subfamily. Interacts with YBX1.

It is found in the cytoplasm. It localises to the cytoplasmic granule. The protein resides in the nucleus. The catalysed reaction is 2-deoxy-D-ribose 5-phosphate = D-glyceraldehyde 3-phosphate + acetaldehyde. The protein operates within carbohydrate degradation; 2-deoxy-D-ribose 1-phosphate degradation; D-glyceraldehyde 3-phosphate and acetaldehyde from 2-deoxy-alpha-D-ribose 1-phosphate: step 2/2. Functionally, catalyzes a reversible aldol reaction between acetaldehyde and D-glyceraldehyde 3-phosphate to generate 2-deoxy-D-ribose 5-phosphate. Participates in stress granule (SG) assembly. May allow ATP production from extracellular deoxyinosine in conditions of energy deprivation. The chain is Deoxyribose-phosphate aldolase (Dera) from Mus musculus (Mouse).